The following is a 295-amino-acid chain: GTPase Era (295 aa).

Residues 3–171 enclose the Era-type G domain; that stretch reads KSGFITVIGR…LELMKKYLPE (169 aa). The G1 stretch occupies residues 11 to 18; sequence GRPNVGKS. 11–18 provides a ligand contact to GTP; that stretch reads GRPNVGKS. The interval 37–41 is G2; sequence QTTRN. The G3 stretch occupies residues 58–61; it reads DTPG. GTP-binding positions include 58 to 62 and 120 to 123; these read DTPGM and NKID. A G4 region spans residues 120 to 123; sequence NKID. Residues 150 to 152 are G5; the sequence is ISA. Positions 202-279 constitute a KH type-2 domain; sequence LSEEVPHGIA…SLKVWVKVKK (78 aa).

Belongs to the TRAFAC class TrmE-Era-EngA-EngB-Septin-like GTPase superfamily. Era GTPase family. Monomer.

The protein resides in the cytoplasm. It localises to the cell membrane. Functionally, an essential GTPase that binds both GDP and GTP, with rapid nucleotide exchange. Plays a role in 16S rRNA processing and 30S ribosomal subunit biogenesis and possibly also in cell cycle regulation and energy metabolism. This chain is GTPase Era, found in Clostridium tetani (strain Massachusetts / E88).